The sequence spans 87 residues: Small ribosomal subunit protein bS16 (87 aa).

It belongs to the bacterial ribosomal protein bS16 family.

In Psychrobacter sp. (strain PRwf-1), this protein is Small ribosomal subunit protein bS16.